Here is a 630-residue protein sequence, read N- to C-terminus: tRNA uridine 5-carboxymethylaminomethyl modification enzyme MnmG (630 aa).

FAD is bound at residue 13–18 (GGGHAG). 273-287 (GPRYCPSIEDKIHRF) contacts NAD(+).

It belongs to the MnmG family. As to quaternary structure, homodimer. Heterotetramer of two MnmE and two MnmG subunits. The cofactor is FAD.

The protein resides in the cytoplasm. Its function is as follows. NAD-binding protein involved in the addition of a carboxymethylaminomethyl (cmnm) group at the wobble position (U34) of certain tRNAs, forming tRNA-cmnm(5)s(2)U34. The polypeptide is tRNA uridine 5-carboxymethylaminomethyl modification enzyme MnmG (Pseudomonas aeruginosa (strain ATCC 15692 / DSM 22644 / CIP 104116 / JCM 14847 / LMG 12228 / 1C / PRS 101 / PAO1)).